A 768-amino-acid chain; its full sequence is DNA replication licensing factor MCM3 homolog 1 (768 aa).

An MCM domain is found at 290 to 497 (TFDLLGNSLA…IDRQISEHVA (208 aa)). 340 to 347 (GDPSVAKS) lines the ATP pocket. The Arginine finger signature appears at 472-475 (SRFD). The disordered stretch occupies residues 662–687 (MKQQAEHDAGATGGTVDGHGSSGNDP). The segment covering 672–682 (ATGGTVDGHGS) has biased composition (gly residues).

This sequence belongs to the MCM family.

The protein resides in the nucleus. It catalyses the reaction ATP + H2O = ADP + phosphate + H(+). Functionally, acts as a factor that allows the DNA to undergo a single round of replication per cell cycle. Required for DNA replication and cell proliferation. May act as a component of the MCM complex which is the putative replicative helicase of the replication licensing system in eukaryotic cells. The chain is DNA replication licensing factor MCM3 homolog 1 (ROA1) from Zea mays (Maize).